A 91-amino-acid chain; its full sequence is Large ribosomal subunit protein eL34 (91 aa).

The protein belongs to the eukaryotic ribosomal protein eL34 family.

The polypeptide is Large ribosomal subunit protein eL34 (Thermofilum pendens (strain DSM 2475 / Hrk 5)).